Here is a 266-residue protein sequence, read N- to C-terminus: Potassium/proton antiporter CemA (266 aa).

The next 3 membrane-spanning stretches (helical) occupy residues 46-66 (VIVS…INIL), 151-171 (FLSF…IIIL), and 226-246 (FMSL…KYWI).

It belongs to the CemA family.

It is found in the plastid. It localises to the chloroplast inner membrane. The catalysed reaction is K(+)(in) + H(+)(out) = K(+)(out) + H(+)(in). In terms of biological role, contributes to K(+)/H(+) antiport activity by supporting proton efflux to control proton extrusion and homeostasis in chloroplasts in a light-dependent manner to modulate photosynthesis. Prevents excessive induction of non-photochemical quenching (NPQ) under continuous-light conditions. Indirectly promotes efficient inorganic carbon uptake into chloroplasts. This is Potassium/proton antiporter CemA from Chlorella vulgaris (Green alga).